The sequence spans 395 residues: Tyrosine--tRNA ligase (395 aa).

The short motif at 42–51 (PTAPDIHLGH) is the 'HIGH' region element. A 'KMSKS' region motif is present at residues 226–230 (KMSKS). Lys229 provides a ligand contact to ATP. The region spanning 334–394 (IGLANLLKEA…GKRKFARVTV (61 aa)) is the S4 RNA-binding domain.

Belongs to the class-I aminoacyl-tRNA synthetase family. TyrS type 2 subfamily. In terms of assembly, homodimer.

The protein localises to the cytoplasm. It catalyses the reaction tRNA(Tyr) + L-tyrosine + ATP = L-tyrosyl-tRNA(Tyr) + AMP + diphosphate + H(+). Functionally, catalyzes the attachment of tyrosine to tRNA(Tyr) in a two-step reaction: tyrosine is first activated by ATP to form Tyr-AMP and then transferred to the acceptor end of tRNA(Tyr). The sequence is that of Tyrosine--tRNA ligase from Mannheimia succiniciproducens (strain KCTC 0769BP / MBEL55E).